A 224-amino-acid chain; its full sequence is Urease accessory protein UreF (224 aa).

It belongs to the UreF family. UreD, UreF and UreG form a complex that acts as a GTP-hydrolysis-dependent molecular chaperone, activating the urease apoprotein by helping to assemble the nickel containing metallocenter of UreC. The UreE protein probably delivers the nickel.

Its subcellular location is the cytoplasm. Required for maturation of urease via the functional incorporation of the urease nickel metallocenter. This chain is Urease accessory protein UreF, found in Klebsiella pneumoniae (strain 342).